Reading from the N-terminus, the 211-residue chain is Riboflavin kinase (211 aa).

The H-T-H motif-like stretch occupies residues 1–85 (MKKILMLIEL…CDKISNALSK (85 aa)). The segment at 86–211 (GVIVGEVVSG…GDRVRLEVIQ (126 aa)) is riboflavin kinase. Residue 95-100 (GLGEGA) participates in CDP binding. Positions 122 and 124 each coordinate Mg(2+). Positions 178 and 186 each coordinate FMN. 191–194 (VNLR) is a CDP binding site.

The protein belongs to the archaeal riboflavin kinase family. The cofactor is Mg(2+).

The catalysed reaction is riboflavin + CTP = CDP + FMN + H(+). The protein operates within cofactor biosynthesis; FMN biosynthesis; FMN from riboflavin (CTP route): step 1/1. Catalyzes the CTP-dependent phosphorylation of riboflavin (vitamin B2) to form flavin mononucleotide (FMN). In Thermococcus kodakarensis (strain ATCC BAA-918 / JCM 12380 / KOD1) (Pyrococcus kodakaraensis (strain KOD1)), this protein is Riboflavin kinase (ribK).